A 182-amino-acid chain; its full sequence is Ribosome-recycling factor (182 aa).

It belongs to the RRF family.

The protein resides in the cytoplasm. Its function is as follows. Responsible for the release of ribosomes from messenger RNA at the termination of protein biosynthesis. May increase the efficiency of translation by recycling ribosomes from one round of translation to another. This chain is Ribosome-recycling factor, found in Gloeothece citriformis (strain PCC 7424) (Cyanothece sp. (strain PCC 7424)).